Here is a 506-residue protein sequence, read N- to C-terminus: Hippocampus abundant transcript-like protein 1 (506 aa).

The segment at 1 to 25 is disordered; it reads MSVEPPPELEEKAASEPEAGAMPEK. At 1-49 the chain is on the extracellular side; it reads MSVEPPPELEEKAASEPEAGAMPEKRAGAQAAGSTWLQGFGRPSVYHAA. Residues 50–70 traverse the membrane as a helical segment; it reads IVIFLEFFAWGLLTTPMLTVL. The Cytoplasmic portion of the chain corresponds to 71–82; it reads HETFSQHTFLMN. A helical transmembrane segment spans residues 83-103; that stretch reads GLIQGVKGLLSFLSAPLIGAL. Topologically, residues 104 to 111 are extracellular; sequence SDVWGRKP. A helical membrane pass occupies residues 112–132; the sequence is FLLGTVFFTCFPIPLMRISPW. Residues 133-134 lie on the Cytoplasmic side of the membrane; sequence WY. The chain crosses the membrane as a helical span at residues 135–155; sequence FAMISVSGVFSVTFSVIFAYV. At 156–168 the chain is on the extracellular side; sequence ADVTQEHERSTAY. The helical transmembrane segment at 169–189 threads the bilayer; the sequence is GWVSATFAASLVSSPAIGAYL. Residues 190 to 196 lie on the Cytoplasmic side of the membrane; sequence SASYGDS. Residues 197 to 217 form a helical membrane-spanning segment; the sequence is LVVLVATVVALLDICFILVAV. Residues 218 to 255 lie on the Extracellular side of the membrane; the sequence is PESLPEKMRPVSWGAQISWKQADPFASLKKVGKDSTVL. The chain crosses the membrane as a helical span at residues 256–276; that stretch reads LICITVFLSYLPEAGQYSSFF. Residues 277-281 are Cytoplasmic-facing; that stretch reads LYLRQ. The helical transmembrane segment at 282-302 threads the bilayer; sequence VIGFGSVKIAAFIAMVGILSI. The Extracellular segment spans residues 303-319; it reads VAQTAFLSILMRSLGNK. Residues 320 to 340 traverse the membrane as a helical segment; that stretch reads NTVLLGLGFQMLQLAWYGFGS. Gln-341 is a topological domain (cytoplasmic). A helical transmembrane segment spans residues 342–362; that stretch reads AWMMWAAGTVAAMSSITFPAI. At 363–387 the chain is on the extracellular side; sequence SALVSRNAESDQQGVAQGIITGIRG. The helical transmembrane segment at 388-408 threads the bilayer; sequence LCNGLGPALYGFIFYMFHVEL. Residues 409–428 are Cytoplasmic-facing; sequence TELGPKLNSNNVPLQGAVIP. The chain crosses the membrane as a helical span at residues 429–449; the sequence is GPPFLFGACIVLMSFLVALFI. Over 450–506 the chain is Extracellular; the sequence is PEYSKASGVQKHSNSSSGSLTNTPERGSDEDIEPLLQDSSIWELSSFEEPGNQCTEL. Residues 457–481 are disordered; sequence GVQKHSNSSSGSLTNTPERGSDEDI. Polar residues predominate over residues 459 to 474; that stretch reads QKHSNSSSGSLTNTPE. An N-linked (GlcNAc...) asparagine glycan is attached at Asn-463.

Belongs to the major facilitator superfamily.

It is found in the membrane. The protein is Hippocampus abundant transcript-like protein 1 of Homo sapiens (Human).